A 493-amino-acid chain; its full sequence is Transcript termination protein OPG145 (493 aa).

The Helicase ATP-binding domain maps to 100 to 256 (MIESKRPLYI…NSIINIAKLS (157 aa)). Position 113–120 (113–120 (LACGFGKT)) interacts with ATP. The short motif at 206–209 (DESH) is the DESH box element. Positions 309–456 (ILDTLVEEFK…IISLSVDKLG (148 aa)) constitute a Helicase C-terminal domain.

This sequence belongs to the helicase family. Poxviruses subfamily. As to quaternary structure, interacts with OPG087. Might be part of a transcription complex composed at least of OPG087, OPG110, and OPG145.

The protein localises to the virion. In terms of biological role, DNA helicase which seems to act as a postreplicative transcription termination factor. Involved in ATP-dependent release of nascent RNA. Forms a stable complex with single-stranded DNA, and to a lesser extent RNA. The chain is Transcript termination protein OPG145 (OPG145) from Homo sapiens (Human).